The following is a 652-amino-acid chain: Vacuolar fusion protein MON1 homolog A (652 aa).

Residues 102-141 (MQRKRSSECLDGTLTPSDGQSMERAESPTPGMAQGMEPGA) are disordered. Phosphoserine occurs at positions 128 and 153. Phosphothreonine is present on Thr158. A disordered region spans residues 158-185 (TESEDGAASGDSHKEGTRGPPPLPTDMR). Ser188 carries the post-translational modification Phosphoserine. The tract at residues 211–245 (PGSSEDWLEPPGAVGRPATEPPREGTTEGDEEDAT) is disordered.

The protein belongs to the MON1/SAND family. Interacts with CCZ1. Found in a complex with RMC1, CCZ1, MON1A and MON1B. The MON1A-CCZ1B complex interacts with RIMOC1. The MON1A-CCZ1B complex interacts with RAB7A and this interaction is enhanced in the presence of RIMOC1.

Functionally, plays an important role in membrane trafficking through the secretory apparatus. Not involved in endocytic trafficking to lysosomes. Acts in concert with CCZ1, as a guanine exchange factor (GEF) for RAB7, promotes the exchange of GDP to GTP, converting it from an inactive GDP-bound form into an active GTP-bound form. This chain is Vacuolar fusion protein MON1 homolog A (MON1A), found in Homo sapiens (Human).